The chain runs to 160 residues: Ribonuclease HI (160 aa).

Positions 4–147 (TPNSVTLYTD…CDRLAVAAYQ (144 aa)) constitute an RNase H type-1 domain. Residues aspartate 13, glutamate 52, aspartate 74, and aspartate 139 each coordinate Mg(2+).

This sequence belongs to the RNase H family. In terms of assembly, monomer. It depends on Mg(2+) as a cofactor.

Its subcellular location is the cytoplasm. It catalyses the reaction Endonucleolytic cleavage to 5'-phosphomonoester.. In terms of biological role, endonuclease that specifically degrades the RNA of RNA-DNA hybrids. This is Ribonuclease HI (rnhA) from Synechocystis sp. (strain ATCC 27184 / PCC 6803 / Kazusa).